Here is a 99-residue protein sequence, read N- to C-terminus: Fetal and adult testis-expressed transcript protein homolog (99 aa).

A helical transmembrane segment spans residues 79–98 (AALFTLLVSVCIANLWLWVH).

As to quaternary structure, interacts with BIK and RNF183. Interacts with IMMT/MIC60and EMD.

The protein resides in the mitochondrion. Its subcellular location is the mitochondrion outer membrane. It is found in the endoplasmic reticulum membrane. Its function is as follows. Involved in the regulation of endoplasmic reticulum (ER)-mitochondria coupling. Negatively regulates the ER-mitochondria distance and Ca(2+) transfer from ER to mitochondria possibly implicating it in the regulation of apoptosis. May collaborate with RNF183 to restrain BIK protein levels thus regulating apoptotic signaling. This is Fetal and adult testis-expressed transcript protein homolog (Fate1) from Mus musculus (Mouse).